The following is a 121-amino-acid chain: Basic phospholipase A2 BmjeTX-II (121 aa).

Disulfide bonds link Cys26–Cys114, Cys28–Cys45, Cys44–Cys95, Cys50–Cys121, Cys51–Cys88, Cys58–Cys82, and Cys76–Cys86. Ca(2+)-binding residues include Tyr27, Gly29, and Gly31. His48 is a catalytic residue. Asp49 contacts Ca(2+). Residue Asp89 is part of the active site.

It depends on Ca(2+) as a cofactor. In terms of tissue distribution, expressed by the venom gland.

It localises to the secreted. It carries out the reaction a 1,2-diacyl-sn-glycero-3-phosphocholine + H2O = a 1-acyl-sn-glycero-3-phosphocholine + a fatty acid + H(+). Snake venom phospholipase A2 (PLA2) that induces blockade of neuromuscular contraction in an indirectly stimulated chick biventer cervicis nerve-muscle preparation. Does not inhibit contraction of chick biventer cervicic nerve-muscle preparation in response to treatment with acetylcholine or KCl. The neuromuscular blockade is mediated by inhibitory action at the presynaptic motor nerve endings. Lyses skeletal myoblasts and myotubes in vitro, and intramuscular injection causes local muscle necrosis. Induces edema in the mouse foot pad. Induces a transient increase of IL-6 levels. PLA2 catalyzes the calcium-dependent hydrolysis of the 2-acyl groups in 3-sn-phosphoglycerides. This is Basic phospholipase A2 BmjeTX-II from Bothrops marajoensis (Marajo lancehead).